We begin with the raw amino-acid sequence, 140 residues long: Ribosomal RNA large subunit methyltransferase H (140 aa).

S-adenosyl-L-methionine is bound by residues Leu-58, Gly-90, and 108 to 113 (LSLLTF).

It belongs to the RNA methyltransferase RlmH family. As to quaternary structure, homodimer.

The protein localises to the cytoplasm. The catalysed reaction is pseudouridine(1915) in 23S rRNA + S-adenosyl-L-methionine = N(3)-methylpseudouridine(1915) in 23S rRNA + S-adenosyl-L-homocysteine + H(+). In terms of biological role, specifically methylates the pseudouridine at position 1915 (m3Psi1915) in 23S rRNA. This Protochlamydia amoebophila (strain UWE25) protein is Ribosomal RNA large subunit methyltransferase H.